The chain runs to 572 residues: Proline--tRNA ligase (572 aa).

The protein belongs to the class-II aminoacyl-tRNA synthetase family. ProS type 1 subfamily. In terms of assembly, homodimer.

The protein resides in the cytoplasm. It catalyses the reaction tRNA(Pro) + L-proline + ATP = L-prolyl-tRNA(Pro) + AMP + diphosphate. Its function is as follows. Catalyzes the attachment of proline to tRNA(Pro) in a two-step reaction: proline is first activated by ATP to form Pro-AMP and then transferred to the acceptor end of tRNA(Pro). As ProRS can inadvertently accommodate and process non-cognate amino acids such as alanine and cysteine, to avoid such errors it has two additional distinct editing activities against alanine. One activity is designated as 'pretransfer' editing and involves the tRNA(Pro)-independent hydrolysis of activated Ala-AMP. The other activity is designated 'posttransfer' editing and involves deacylation of mischarged Ala-tRNA(Pro). The misacylated Cys-tRNA(Pro) is not edited by ProRS. In Haemophilus influenzae (strain 86-028NP), this protein is Proline--tRNA ligase.